The primary structure comprises 495 residues: Siroheme synthase 2 (495 aa).

A precorrin-2 dehydrogenase /sirohydrochlorin ferrochelatase region spans residues 1 to 205; sequence MDHYPIFLNL…GREREAEQAM (205 aa). Residues 22 to 23 and 43 to 44 contribute to the NAD(+) site; these read ET and PD. Serine 130 is modified (phosphoserine). The interval 220-495 is uroporphyrinogen-III C-methyltransferase; that stretch reads GEVYLVGAGP…HPAPADTEQA (276 aa). Proline 229 provides a ligand contact to S-adenosyl-L-methionine. Aspartate 252 (proton acceptor) is an active-site residue. Lysine 274 acts as the Proton donor in catalysis. S-adenosyl-L-methionine-binding positions include 305–307, isoleucine 310, 335–336, methionine 387, and alanine 416; these read GGD and TA. The segment at 471-495 is disordered; sequence FPEHGCLRGEPRPTRHPAPADTEQA.

It in the N-terminal section; belongs to the precorrin-2 dehydrogenase / sirohydrochlorin ferrochelatase family. This sequence in the C-terminal section; belongs to the precorrin methyltransferase family.

The enzyme catalyses uroporphyrinogen III + 2 S-adenosyl-L-methionine = precorrin-2 + 2 S-adenosyl-L-homocysteine + H(+). It carries out the reaction precorrin-2 + NAD(+) = sirohydrochlorin + NADH + 2 H(+). It catalyses the reaction siroheme + 2 H(+) = sirohydrochlorin + Fe(2+). It participates in cofactor biosynthesis; adenosylcobalamin biosynthesis; precorrin-2 from uroporphyrinogen III: step 1/1. The protein operates within cofactor biosynthesis; adenosylcobalamin biosynthesis; sirohydrochlorin from precorrin-2: step 1/1. It functions in the pathway porphyrin-containing compound metabolism; siroheme biosynthesis; precorrin-2 from uroporphyrinogen III: step 1/1. Its pathway is porphyrin-containing compound metabolism; siroheme biosynthesis; siroheme from sirohydrochlorin: step 1/1. It participates in porphyrin-containing compound metabolism; siroheme biosynthesis; sirohydrochlorin from precorrin-2: step 1/1. Multifunctional enzyme that catalyzes the SAM-dependent methylations of uroporphyrinogen III at position C-2 and C-7 to form precorrin-2 via precorrin-1. Then it catalyzes the NAD-dependent ring dehydrogenation of precorrin-2 to yield sirohydrochlorin. Finally, it catalyzes the ferrochelation of sirohydrochlorin to yield siroheme. The sequence is that of Siroheme synthase 2 from Halorhodospira halophila (strain DSM 244 / SL1) (Ectothiorhodospira halophila (strain DSM 244 / SL1)).